A 246-amino-acid polypeptide reads, in one-letter code: MSEQIYGIHAVNSILTHSPERLIEVFVLKGREDKRLQPLLNELYSLGIGVQFVNRQTLDKKADGEVHQGVIARVQAAKELNENDLDEILANKQNPLLLVLDGVTDPHNLGACLRTADAAGAVAVIVPKDKSAQLTSIARKVACGAAETVPLIRVTNLSRTLRDLQQNHNIWVVGTAGEATETIYQSKLTGPLALVMGAEGEGMRRLTREHCDQLISIPMAGSVSSLNVSVATGVCLFEIVRQRLGS.

3 residues coordinate S-adenosyl-L-methionine: Gly197, Ile217, and Leu226.

This sequence belongs to the class IV-like SAM-binding methyltransferase superfamily. RNA methyltransferase TrmH family. RlmB subfamily.

It is found in the cytoplasm. It carries out the reaction guanosine(2251) in 23S rRNA + S-adenosyl-L-methionine = 2'-O-methylguanosine(2251) in 23S rRNA + S-adenosyl-L-homocysteine + H(+). Functionally, specifically methylates the ribose of guanosine 2251 in 23S rRNA. This Haemophilus influenzae (strain ATCC 51907 / DSM 11121 / KW20 / Rd) protein is 23S rRNA (guanosine-2'-O-)-methyltransferase RlmB.